The sequence spans 364 residues: Apelin receptor (364 aa).

Residues 1–39 (MATDEFSSSTTPSYDYYDYTNESGLPPCDETDWDLSYSL) lie on the Extracellular side of the membrane. N-linked (GlcNAc...) asparagine glycosylation is present at N21. 2 disulfides stabilise this stretch: C28-C288 and C110-C187. A helical membrane pass occupies residues 40 to 60 (LPVFYMIVFVLGLSGNGVVIF). Topologically, residues 61 to 78 (TVWKAKPKRRSADTYIGN) are cytoplasmic. A helical transmembrane segment spans residues 79–99 (LALADLAFVVTLPLWATYTAL). Topologically, residues 100–112 (GFHWPFGSALCKL) are extracellular. Residues 113–133 (SSYLVLLNMFASVFCLTCLSF) form a helical membrane-spanning segment. Residues 134–153 (DRYLAIVHSLSSAKLRSRSS) lie on the Cytoplasmic side of the membrane. A helical transmembrane segment spans residues 154 to 174 (ILVSLAVIWLFSGLLALPSLI). Over 175 to 201 (LRDTRVEGNNTICDLDFSGVSSKENEN) the chain is Extracellular. N-linked (GlcNAc...) asparagine glycosylation is present at N183. The chain crosses the membrane as a helical span at residues 202 to 222 (FWIGGLSILTTVPGFLLPLLL). At 223–250 (MTIFYCFIGGKVTMHFQNLKKEEQKKKR) the chain is on the cytoplasmic side. Residues 251 to 271 (LLKIIITLVVVFAICWLPFHI) form a helical membrane-spanning segment. Residues 272 to 298 (LKTIHFLDLMGFLELSCSTQNIIVSLH) lie on the Extracellular side of the membrane. The chain crosses the membrane as a helical span at residues 299–319 (PYATCLAYINSCLNPFLYAFF). Residues 320–364 (DLRFRSQCFFFFGFKKALQGHLSNTSSSLSAQTQKSEIHSLATKV) lie on the Cytoplasmic side of the membrane.

It belongs to the G-protein coupled receptor 1 family.

It localises to the cell membrane. Its function is as follows. G protein-coupled receptor for peptide hormones apelin (apln) and apelin receptor early endogenous ligand (apela), that plays a role in the regulation of normal cardiovascular function and fluid homeostasis. When acting as apelin receptor, activates both G(i) protein pathway that inhibits adenylate cyclase activity, and the beta-arrestin pathway that promotes internalization of the receptor. Also functions as mechanoreceptor that is activated by pathological stimuli in a G-protein-independent fashion to induce beta-arrestin signaling, hence eliciting cardiac hypertrophy. However, the presence of apelin ligand blunts cardiac hypertrophic induction from APLNR/APJ on response to pathological stimuli. Plays a key role in early development such as gastrulation, blood vessels formation and heart morphogenesis by acting as a receptor for apela hormone, promoting endoderm and mesendoderm cell migration and regulating the migration of cells fated to become myocardial progenitors, respectively. Promotes angioblast migration toward the embryonic midline, i.e. the position of the future vessel formation, during vasculogenesis. May promote sinus venosus (SV)-derived endothelial cells migration into the developing heart to promote coronary blood vessel development. Required for cardiovascular development, particularly for intersomitic vein angiogenesis. Plays also a role in various processes in adults such as regulation of blood vessel formation, blood pressure, heart contractility, and heart failure. Acts upstream of the i/o type of G-alpha proteins in the differentiation of endothelium, erythroid cells, myeloid cells and cardiomyocytes. The sequence is that of Apelin receptor (aplnr) from Xenopus tropicalis (Western clawed frog).